The sequence spans 741 residues: Methionine--tRNA ligase (741 aa).

Over residues 1-22 (MTMKQYTMSKMNAETQTQTRES) the composition is skewed to polar residues. The tract at residues 1–25 (MTMKQYTMSKMNAETQTQTRESFPT) is disordered. The 'HIGH' region signature appears at 36-46 (PYANGDLHIGH). 4 residues coordinate Zn(2+): Cys-167, Cys-170, Cys-179, and Cys-183. A disordered region spans residues 309-329 (VRSHSSSSAKDSSEGNSPSNI). Low complexity predominate over residues 311 to 329 (SHSSSSAKDSSEGNSPSNI). An ATP-binding site is contributed by Thr-381. A disordered region spans residues 591-629 (KLADRVTDPTDDDDSDTDTETGTDVAETTNESHSESNMT). Acidic residues predominate over residues 599–611 (PTDDDDSDTDTET). The span at 616-629 (AETTNESHSESNMT) shows a compositional bias: polar residues. Residues 643–741 (EFEELDLRVA…EDADPGTSIQ (99 aa)) enclose the tRNA-binding domain.

Belongs to the class-I aminoacyl-tRNA synthetase family. MetG type 1 subfamily. As to quaternary structure, homodimer. Zn(2+) serves as cofactor.

Its subcellular location is the cytoplasm. The catalysed reaction is tRNA(Met) + L-methionine + ATP = L-methionyl-tRNA(Met) + AMP + diphosphate. Is required not only for elongation of protein synthesis but also for the initiation of all mRNA translation through initiator tRNA(fMet) aminoacylation. This is Methionine--tRNA ligase from Haloquadratum walsbyi (strain DSM 16790 / HBSQ001).